Here is an 88-residue protein sequence, read N- to C-terminus: Cell division topological specificity factor (88 aa).

This sequence belongs to the MinE family.

Its function is as follows. Prevents the cell division inhibition by proteins MinC and MinD at internal division sites while permitting inhibition at polar sites. This ensures cell division at the proper site by restricting the formation of a division septum at the midpoint of the long axis of the cell. In Cronobacter sakazakii (strain ATCC BAA-894) (Enterobacter sakazakii), this protein is Cell division topological specificity factor.